The chain runs to 217 residues: Protein-L-isoaspartate O-methyltransferase (217 aa).

Ser65 is a catalytic residue.

Belongs to the methyltransferase superfamily. L-isoaspartyl/D-aspartyl protein methyltransferase family.

It is found in the cytoplasm. The catalysed reaction is [protein]-L-isoaspartate + S-adenosyl-L-methionine = [protein]-L-isoaspartate alpha-methyl ester + S-adenosyl-L-homocysteine. Catalyzes the methyl esterification of L-isoaspartyl residues in peptides and proteins that result from spontaneous decomposition of normal L-aspartyl and L-asparaginyl residues. It plays a role in the repair and/or degradation of damaged proteins. This chain is Protein-L-isoaspartate O-methyltransferase, found in Methanoregula boonei (strain DSM 21154 / JCM 14090 / 6A8).